The primary structure comprises 1160 residues: Transcription factor tau 138 kDa subunit (1160 aa).

Positions 475-533 are disordered; sequence PNSKKTPNKNKRKRQVKNSTNASVAGNISNPKRIKLEQHVSTAQEPKSAEDSPSSNGGT. Residues 480 to 490 show a composition bias toward basic residues; the sequence is TPNKNKRKRQV. Polar residues-rich tracts occupy residues 491–504 and 513–529; these read KNSTNASVAGNISN and HVSTAQEPKSAEDSPSS. Ser-546 bears the Phosphoserine mark.

As to quaternary structure, component of the TFIIIC complex composed of TFC1, TFC3, TFC4, TFC6, TFC7 and TFC8. The subunits are organized in two globular domains, tauA and tauB, connected by a proteolysis-sensitive and flexible linker. Interacts with TFC1, TFC4 and TFC6.

It is found in the nucleus. Its subcellular location is the mitochondrion. Functionally, TFIIIC mediates tRNA and 5S RNA gene activation by binding to intragenic promoter elements. Upstream of the transcription start site, TFIIIC assembles the initiation complex TFIIIB-TFIIIC-tDNA, which is sufficient for RNA polymerase III recruitment and function. Part of the tauB domain of TFIIIC that binds boxB DNA promoter sites of tRNA and similar genes. TFC3 is essential for cell viability. Cooperates with TFC6 in DNA binding. The chain is Transcription factor tau 138 kDa subunit (TFC3) from Saccharomyces cerevisiae (strain ATCC 204508 / S288c) (Baker's yeast).